The chain runs to 574 residues: uncharacterized protein (574 aa).

Residues 297–317 (SAASKPRKRKKDEVSGAQVNS) are disordered.

This is an uncharacterized protein from Mus musculus (Mouse).